The following is a 545-amino-acid chain: MLTQLKTYPKLLKHYEEIKEVHMRDWFFKDKERASRYFLQFESLSLDYSKNRLNDTTLKLLFELANDCSLKEKIEAMFKGEKINTTEKRAVLHTALRSLNDTEILLDNMEVLKSIRSVLKRMRAFSDSVRSGKRLGYTNQVITDIVNIGIGGSDLGALMVCTALKRYAHPRLKMHFVSNVDGTQILDVLEKLNPASTLFIVASKTFSTQETLTNALTARKWFVERSGDEKHIAKHFVAVSTNKEAVQQFGIDEHNMFEFWDFVGGRYSLWSAIGLSIMIYLGKKNFNALLKGAYLMDEHFRNAPFESNLPVLMGLIGVWYINFFQSKSHLIAPYDQYLRHFPKFIQQLDMESNGKRISKKGEIIPYDTCPVVWGDMGINAQHAFFQLLHQGTHLIPIDFIASLDKKPNAKGHHEILFSNVLAQAQAFMKGKSYEEALGELLFKGLDKDEAKDLAHHRVFFGNRPSNILLLEKISPSNIGALVALYEHKVFVQGVIWDINSFDQWGVELGKELAVPILQELEGHKSNAYFDSSTKHLIELYKNYNQ.

Glu351 functions as the Proton donor in the catalytic mechanism. Active-site residues include His382 and Lys510.

This sequence belongs to the GPI family.

The protein resides in the cytoplasm. It catalyses the reaction alpha-D-glucose 6-phosphate = beta-D-fructose 6-phosphate. Its pathway is carbohydrate biosynthesis; gluconeogenesis. It functions in the pathway carbohydrate degradation; glycolysis; D-glyceraldehyde 3-phosphate and glycerone phosphate from D-glucose: step 2/4. In terms of biological role, catalyzes the reversible isomerization of glucose-6-phosphate to fructose-6-phosphate. The sequence is that of Glucose-6-phosphate isomerase from Helicobacter pylori (strain ATCC 700392 / 26695) (Campylobacter pylori).